The chain runs to 438 residues: Glutamyl-tRNA(Gln) amidotransferase subunit D (438 aa).

Residues 92 to 422 (PEVTIIGTGG…EEVRKMMLTN (331 aa)) enclose the Asparaginase/glutaminase domain. Active-site residues include threonine 102, threonine 178, aspartate 179, and lysine 256.

This sequence belongs to the asparaginase 1 family. GatD subfamily. As to quaternary structure, heterodimer of GatD and GatE.

The enzyme catalyses L-glutamyl-tRNA(Gln) + L-glutamine + ATP + H2O = L-glutaminyl-tRNA(Gln) + L-glutamate + ADP + phosphate + H(+). Functionally, allows the formation of correctly charged Gln-tRNA(Gln) through the transamidation of misacylated Glu-tRNA(Gln) in organisms which lack glutaminyl-tRNA synthetase. The reaction takes place in the presence of glutamine and ATP through an activated gamma-phospho-Glu-tRNA(Gln). The GatDE system is specific for glutamate and does not act on aspartate. The protein is Glutamyl-tRNA(Gln) amidotransferase subunit D of Pyrococcus abyssi (strain GE5 / Orsay).